We begin with the raw amino-acid sequence, 505 residues long: Alpha-1-syntrophin (505 aa).

2 disordered regions span residues 1-25 and 40-77; these read MASGRRAPRTGLLELRAGAGSGAGG and LTVSPADGDPGPEPGAPREQEPAQLNGAAEPGAGPPQL. 2 consecutive PH domains span residues 6–269 and 293–401; these read RAPR…AQVN and DIKQ…DGCH. The PDZ domain maps to 87–170; that stretch reads RVTVRKADAG…EVVLEVKYMK (84 aa). Phosphoserine occurs at positions 101, 184, 189, 193, and 200. The interval 180-210 is disordered; sequence TGGTSVGWDSPPASPLQRQPSSPGPTPRNFS. The SU domain maps to 449–505; that stretch reads PFEKLQMSSDDGASLLFLDFGGAEGEIQLDLHSCPKTIVFIIHSFLSAKVTRLGLLA. The tract at residues 483–505 is calmodulin-binding; it reads PKTIVFIIHSFLSAKVTRLGLLA.

It belongs to the syntrophin family. In terms of assembly, monomer and homodimer. Interacts with the other members of the syntrophin family SNTB1 and SNTB2; SGCG and SGCA of the dystrophin glycoprotein complex; NOS1; GRB2; the sodium channel proteins SCN4A and SCN5A; F-actin and calmodulin. Interacts with dystrophin protein DMD and related proteins DTNA and UTRN and with MAPK12, TGFA and GA. Interacts with MYOC; regulates muscle hypertrophy. Interacts with DTNB. Post-translationally, phosphorylated by CaM-kinase II. Phosphorylation may inhibit the interaction with DMD. As to expression, high expression in skeletal muscle and heart. Low expression in brain, pancreas, liver, kidney and lung. Not detected in placenta.

Its subcellular location is the cell membrane. The protein localises to the sarcolemma. It localises to the cell junction. The protein resides in the cytoplasm. It is found in the cytoskeleton. Functionally, adapter protein that binds to and probably organizes the subcellular localization of a variety of membrane proteins. May link various receptors to the actin cytoskeleton and the extracellular matrix via the dystrophin glycoprotein complex. Plays an important role in synapse formation and in the organization of UTRN and acetylcholine receptors at the neuromuscular synapse. Binds to phosphatidylinositol 4,5-bisphosphate. In Homo sapiens (Human), this protein is Alpha-1-syntrophin (SNTA1).